The sequence spans 348 residues: MASFVARLTLALSFIALALAGYSLVQNTLSSPTHTRLNLIPTWLDSTFDSADVLSYLGFGKSSGRLSDSNCVFSAVKEIVDAAITAETRMGASLIRLHFHDCFVDGCDGGILLNDTANFTGEQGAPANSNSVRGFSVIDQAKRNAQTKCADTPVSCADVLAIAARDAFRKFTNQTYNITLGRQDARTANLTGANTQLPAPFDNLSIQTAKFADKGFNQREMVVLAGAHTVGFSRCAVLCTSTNLNQNRSATLQCTCPASANDTGLVGLDPSPGTFDKKYFEELVKGQGLLFSDQELMQSNATVTAVRRYRDATGAFLTDFAAAMVKMSNLPPSAGVQLEIRNVCSRVN.

An N-terminal signal peptide occupies residues 1 to 20 (MASFVARLTLALSFIALALA). A propeptide spanning residues 21 to 67 (GYSLVQNTLSSPTHTRLNLIPTWLDSTFDSADVLSYLGFGKSSGRLS) is cleaved from the precursor. 4 disulfides stabilise this stretch: Cys-71/Cys-149, Cys-102/Cys-107, Cys-156/Cys-344, and Cys-235/Cys-256. His-100 acts as the Proton acceptor in catalysis. Ca(2+)-binding residues include Asp-101, Val-104, Gly-106, and Asp-108. Residues Asn-114, Asn-118, Asn-173, Asn-177, and Asn-189 are each glycosylated (N-linked (GlcNAc...) asparagine). A substrate-binding site is contributed by Pro-198. Asn-203 is a glycosylation site (N-linked (GlcNAc...) asparagine). His-228 lines the heme b pocket. Residue Thr-229 coordinates Ca(2+). N-linked (GlcNAc...) asparagine glycosylation is found at Asn-247 and Asn-261. Residues Asp-269, Ser-271, and Asp-276 each coordinate Ca(2+). Asn-300 is a glycosylation site (N-linked (GlcNAc...) asparagine).

Belongs to the peroxidase family. Classical plant (class III) peroxidase subfamily. Ca(2+) serves as cofactor. Heme b is required as a cofactor. In terms of tissue distribution, highly expressed in suspension cultured cells. Weak expression also found in the stems of intact plants. No expression in leaf, tuberous root and non-tuberous root.

The protein localises to the secreted. It catalyses the reaction 2 a phenolic donor + H2O2 = 2 a phenolic radical donor + 2 H2O. Removal of H(2)O(2), oxidation of toxic reductants, biosynthesis and degradation of lignin, suberization, auxin catabolism, response to environmental stresses such as wounding, pathogen attack and oxidative stress. These functions might be dependent on each isozyme/isoform in each plant tissue. Its function is as follows. May contribute to protection against cold-induced oxidative stress. The polypeptide is Neutral peroxidase (Ipomoea batatas (Sweet potato)).